Reading from the N-terminus, the 50-residue chain is Thymosin beta-4 (50 aa).

The interval 1-50 is disordered; sequence MLLPATMSDKPDMAEIEKFDKSKLKKTETQEKNPLPSKETIEQEKQAGES. At Ser-8 the chain carries Phosphoserine. Positions 9–31 are enriched in basic and acidic residues; it reads DKPDMAEIEKFDKSKLKKTETQE. Lys-10 is subject to N6-acetyllysine. Lys-18 carries the N6-acetyllysine; alternate modification. Lys-18 participates in a covalent cross-link: Glycyl lysine isopeptide (Lys-Gly) (interchain with G-Cter in SUMO2); alternate. Thr-29 bears the Phosphothreonine mark. N6-acetyllysine is present on Lys-32. Residue Ser-37 is modified to Phosphoserine. Lys-38 is subject to N6-acetyllysine. Residues 39 to 50 are compositionally biased toward basic and acidic residues; that stretch reads ETIEQEKQAGES. Residue Thr-40 is modified to Phosphothreonine. An N6-acetyllysine modification is found at Lys-45.

This sequence belongs to the thymosin beta family. In terms of assembly, identified in a complex composed of ACTA1, COBL, GSN AND TMSB4X. Interacts with SERPINB1. In terms of processing, acSDKP is inactivated by ACE, which removes the dipeptide Lys-Pro from its C-terminus. In terms of tissue distribution, originally found in thymus but it is widely distributed in many tissues.

The protein localises to the cytoplasm. It is found in the cytoskeleton. Its function is as follows. Plays an important role in the organization of the cytoskeleton. Binds to and sequesters actin monomers (G actin) and therefore inhibits actin polymerization. Functionally, potent inhibitor of bone marrow derived stem cell differentiation. Acts by inhibits the entry of hematopoietic pluripotent stem cells into the S-phase. In Mus musculus (Mouse), this protein is Thymosin beta-4 (Tmsb4x).